Consider the following 297-residue polypeptide: uncharacterized protein (297 aa).

Residues 191-211 (VMIILSCSNITILAVLSIVGL) traverse the membrane as a helical segment. A compositionally biased stretch (polar residues) spans 275–287 (SKTSETQSVSGST). The interval 275 to 297 (SKTSETQSVSGSTHSDEKLTAPM) is disordered. A compositionally biased stretch (basic and acidic residues) spans 288-297 (HSDEKLTAPM).

It is found in the host membrane. This is an uncharacterized protein from Cryphonectria parasitica mycoreovirus 1 (strain 9B21) (CpMYRV-1).